A 176-amino-acid polypeptide reads, in one-letter code: Alkyl hydroperoxide reductase AhpD (176 aa).

Residue cysteine 131 is the Proton donor of the active site. An intrachain disulfide couples cysteine 131 to cysteine 134. Cysteine 134 acts as the Cysteine sulfenic acid (-SOH) intermediate in catalysis.

This sequence belongs to the AhpD family.

The enzyme catalyses N(6)-[(R)-dihydrolipoyl]-L-lysyl-[lipoyl-carrier protein] + a hydroperoxide = N(6)-[(R)-lipoyl]-L-lysyl-[lipoyl-carrier protein] + an alcohol + H2O. Its function is as follows. Antioxidant protein with alkyl hydroperoxidase activity. Required for the reduction of the AhpC active site cysteine residues and for the regeneration of the AhpC enzyme activity. The protein is Alkyl hydroperoxide reductase AhpD of Methylobacterium sp. (strain 4-46).